A 236-amino-acid chain; its full sequence is uncharacterized protein (236 aa).

The chain crosses the membrane as a helical span at residues 52-72 (FFPYIALFQIIMLIILLILYF). Residues 183-236 (SDKREHDDEELSFTTEMETITTETETSSTIPHLRSLPIKSESSMETTSEETDEE) form a disordered region. The span at 196 to 212 (TTEMETITTETETSSTI) shows a compositional bias: low complexity.

The protein localises to the membrane. This is an uncharacterized protein from Acheta domesticus (House cricket).